The chain runs to 711 residues: Ribosomal RNA large subunit methyltransferase K/L (711 aa).

Positions 42 to 153 (DAQRAVLWSR…KGRATISVDL (112 aa)) constitute a THUMP domain.

The protein belongs to the methyltransferase superfamily. RlmKL family.

The protein localises to the cytoplasm. It catalyses the reaction guanosine(2445) in 23S rRNA + S-adenosyl-L-methionine = N(2)-methylguanosine(2445) in 23S rRNA + S-adenosyl-L-homocysteine + H(+). The catalysed reaction is guanosine(2069) in 23S rRNA + S-adenosyl-L-methionine = N(2)-methylguanosine(2069) in 23S rRNA + S-adenosyl-L-homocysteine + H(+). Its function is as follows. Specifically methylates the guanine in position 2445 (m2G2445) and the guanine in position 2069 (m7G2069) of 23S rRNA. This Xanthomonas oryzae pv. oryzae (strain KACC10331 / KXO85) protein is Ribosomal RNA large subunit methyltransferase K/L.